Reading from the N-terminus, the 486-residue chain is L-arabinose isomerase (486 aa).

Mn(2+)-binding residues include Glu-299, Glu-324, His-341, and His-440.

Belongs to the arabinose isomerase family. The cofactor is Mn(2+).

It catalyses the reaction beta-L-arabinopyranose = L-ribulose. Its pathway is carbohydrate degradation; L-arabinose degradation via L-ribulose; D-xylulose 5-phosphate from L-arabinose (bacterial route): step 1/3. In terms of biological role, catalyzes the conversion of L-arabinose to L-ribulose. This chain is L-arabinose isomerase, found in Shouchella clausii (strain KSM-K16) (Alkalihalobacillus clausii).